The chain runs to 410 residues: Transcription termination factor, mitochondrial (410 aa).

Residues Met-1–Leu-44 constitute a mitochondrion transit peptide.

Belongs to the mTERF family.

The protein localises to the mitochondrion. In terms of biological role, transcription termination factor. Binds promoter DNA and regulates mitochondrial replication and transcription. Transcription termination activity may be polarized with highest termination activity occurring when its DNA-binding site is positioned in the reverse orientation with respect to the incoming RNA polymerase. Required for normal topology and maintenance of mitochondrial DNA (mtDNA) levels. Regulates mtDNA replication by promoting replication pausing, possibly by acting as a natural barrier to replication fork progression. Its function in replication pausing prevents unregulated replication that may occur for example by collisions between the machineries of DNA replication and transcription during mtDNA synthesis. This ensures the incorporation of RNA transcripts into replication intermediates at the replication fork and allow for proper fork progression. Shares mtDNA binding sites with the mitochondrial termination factor mTerf5 and thereby may antagonize mTerf5 function during replication to regulate pausing. Likely to function downstream of Dref which activates genes involved in mtDNA replication and maintenance. This is Transcription termination factor, mitochondrial from Drosophila melanogaster (Fruit fly).